Reading from the N-terminus, the 512-residue chain is Spastin homolog (512 aa).

Residues 1-274 (MFAFSKGPAG…FKGLRQPVKG (274 aa)) are Cytoplasmic-facing. Positions 32 to 97 (IEMDELTKHA…MKLEKSAQDR (66 aa)) form a coiled coil. The disordered stretch occupies residues 110 to 182 (KQSRSATVGP…SDTVHPEPPV (73 aa)). Residues 115-233 (ATVGPSRPAS…ERLLDEVLDN (119 aa)) form an MTBD region. Basic and acidic residues predominate over residues 137 to 163 (APEKKNAAKAKENDENRHVCSRGDRCG). The segment at residues 275–294 (ILLFGPPGNGKTLLAKAVAG) is an intramembrane region (helical). Residue 279 to 286 (GPPGNGKT) participates in ATP binding. Topologically, residues 295 to 512 (ESKQMFFNIS…LSDFSRSFGC (218 aa)) are cytoplasmic.

This sequence belongs to the AAA ATPase family. Spastin subfamily. Homohexamer. The homohexamer is stabilized by ATP-binding. The homohexamer may adopt a ring conformation through which microtubules pass prior to being severed. Interacts with microtubules. Interacts (via N-terminus) with tubulin; the interaction is direct.

It is found in the membrane. It localises to the cytoplasm. Its subcellular location is the cytoskeleton. The protein localises to the perinuclear region. The enzyme catalyses n ATP + n H2O + a microtubule = n ADP + n phosphate + (n+1) alpha/beta tubulin heterodimers.. Functionally, ATP-dependent microtubule severing protein that specifically recognizes and cuts microtubules. Probably by regulating microtubule remodeling, plays a role in new synapse formation in GABAergic DD (Dorsal D type) neurons. This is Spastin homolog from Caenorhabditis elegans.